The primary structure comprises 474 residues: Glutamate--tRNA ligase (474 aa).

Positions proline 9 to glycine 19 match the 'HIGH' region motif. A 'KMSKS' region motif is present at residues lysine 240 to arginine 244. Position 243 (lysine 243) interacts with ATP.

This sequence belongs to the class-I aminoacyl-tRNA synthetase family. Glutamate--tRNA ligase type 1 subfamily. As to quaternary structure, monomer.

Its subcellular location is the cytoplasm. It catalyses the reaction tRNA(Glu) + L-glutamate + ATP = L-glutamyl-tRNA(Glu) + AMP + diphosphate. Functionally, catalyzes the attachment of glutamate to tRNA(Glu) in a two-step reaction: glutamate is first activated by ATP to form Glu-AMP and then transferred to the acceptor end of tRNA(Glu). This is Glutamate--tRNA ligase from Photobacterium profundum (strain SS9).